The sequence spans 215 residues: Cytochrome b6 (215 aa).

A helical membrane pass occupies residues 32–52 (IFYCLGGITLTCFLVQVATGF). Cysteine 35 serves as a coordination point for heme c. Heme b-binding residues include histidine 86 and histidine 100. 3 consecutive transmembrane segments (helical) span residues 90–110 (ASMM…TGGF), 116–136 (LTWV…VTGY), and 186–206 (LHTF…FPMI). Histidine 187 and histidine 202 together coordinate heme b.

It belongs to the cytochrome b family. PetB subfamily. As to quaternary structure, the 4 large subunits of the cytochrome b6-f complex are cytochrome b6, subunit IV (17 kDa polypeptide, PetD), cytochrome f and the Rieske protein, while the 4 small subunits are PetG, PetL, PetM and PetN. The complex functions as a dimer. Heme b serves as cofactor. Requires heme c as cofactor.

It is found in the plastid. The protein resides in the chloroplast thylakoid membrane. In terms of biological role, component of the cytochrome b6-f complex, which mediates electron transfer between photosystem II (PSII) and photosystem I (PSI), cyclic electron flow around PSI, and state transitions. The polypeptide is Cytochrome b6 (Liriodendron tulipifera (Tuliptree)).